Here is a 540-residue protein sequence, read N- to C-terminus: Lysosomal cobalamin transport escort protein LMBD1 (540 aa).

Residues 1–10 (MATSGAASAE) lie on the Extracellular side of the membrane. Residues 11-31 (LVIGWCIFGLLLLAILAFCWI) form a helical membrane-spanning segment. Residues 32-50 (YVRKYQSRRESEVVSTITA) lie on the Cytoplasmic side of the membrane. A helical transmembrane segment spans residues 51 to 71 (IFSLAIALITSALLPVDIFLV). The Extracellular segment spans residues 72 to 100 (SYMKNQNGTFKDWANANVSRQIEDTVLYG). 2 N-linked (GlcNAc...) asparagine glycosylation sites follow: Asn78 and Asn88. Residues 101 to 121 (YYTLYSVILFCVFFWIPFVYF) form a helical membrane-spanning segment. The Cytoplasmic segment spans residues 122-144 (YYEEKDDDDTSKCTQIKTALKYT). Residues 145–165 (LGFVVICALLLLVGAFVPLNV) form a helical membrane-spanning segment. Topologically, residues 166 to 188 (PNNKNSTEWEKVKSLFEELGSSH) are extracellular. Asn170 carries N-linked (GlcNAc...) asparagine glycosylation. Residues 189–209 (GLAALSFSISSLTLIGMLAAI) form a helical membrane-spanning segment. Over 210 to 305 (TYTAYGMSAL…KFCGALRPLK (96 aa)) the chain is Cytoplasmic. A YERL motif; mediates interaction with adapter protein complex 2 and is essential for its function in clathrin-mediated endocytosis of INSR motif is present at residues 232–235 (YERL). Thr238 bears the Phosphothreonine mark. A WTKF motif; mediates interaction with adapter protein complex 2 and is essential for its function in clathrin-mediated endocytosis of INSR motif is present at residues 294–297 (WTKF). The helical transmembrane segment at 306–326 (IVWGIFFILVALLFVISLFLS) threads the bilayer. The Extracellular segment spans residues 327 to 364 (NLDKALHSAGIDSGFIIFGANLSNPLNMLLPLLQTVFP). Residue Asn347 is glycosylated (N-linked (GlcNAc...) asparagine). The chain crosses the membrane as a helical span at residues 365-385 (LDYILITIIIMYFIFTSMAGI). The Cytoplasmic segment spans residues 386–408 (RNIGIWFFWIRLYKIRRGRTRPQ). The helical transmembrane segment at 409–429 (ALLFLCMILLLIVLHTSYMIY) threads the bilayer. At 430–486 (SLAPQYVMYGSQNYLIETNITSDNHKGNSTLSVPKRCDADAPEDQCTVTRTYLFLHK) the chain is on the extracellular side. Residues Asn448 and Asn457 are each glycosylated (N-linked (GlcNAc...) asparagine). Residues 487-507 (FWFFSAAYYFGNWAFLGVFLI) form a helical membrane-spanning segment. Over 508 to 540 (GLIVSCCKGKKSVIEGVDEDSDISDDEPSVYSA) the chain is Cytoplasmic. Phosphoserine is present on residues Ser528 and Ser531.

This sequence belongs to the LIMR family. LMBRD1 subfamily. As to quaternary structure, (Microbial infection) Interacts with hepatitis delta virus NES (HDAg-L). Interacts with ABCD4; this interaction induces the translocation of ABCD4 from the endoplasmic reticulum to the lysosome. Interacts with ABCD4 and MMACHC; this interaction ensures the transport of cobalamin from the lysosome to the cytoplasm. Interacts with INSR, adapter protein complex 2 and clathrin heavy chain. In terms of processing, N-glycosylated. Isoform 3 is expressed in liver.

It is found in the endoplasmic reticulum membrane. It localises to the lysosome membrane. Its subcellular location is the cell membrane. The protein resides in the cytoplasmic vesicle. The protein localises to the clathrin-coated vesicle. Functionally, lysosomal membrane chaperone required to export cobalamin (vitamin B12) from the lysosome to the cytosol, allowing its conversion to cofactors. Targets ABCD4 transporter from the endoplasmic reticulum to the lysosome. Then forms a complex with lysosomal ABCD4 and cytoplasmic MMACHC to transport cobalamin across the lysosomal membrane. Acts as an adapter protein which plays an important role in mediating and regulating the internalization of the insulin receptor (INSR). Involved in clathrin-mediated endocytosis of INSR via its interaction with adapter protein complex 2. Essential for the initiation of gastrulation and early formation of mesoderm structures during embryogenesis. (Microbial infection) May play a role in the assembly of hepatitis delta virus (HDV). The sequence is that of Lysosomal cobalamin transport escort protein LMBD1 from Homo sapiens (Human).